The primary structure comprises 685 residues: Glycine--tRNA ligase beta subunit (685 aa).

This sequence belongs to the class-II aminoacyl-tRNA synthetase family. Tetramer of two alpha and two beta subunits.

It is found in the cytoplasm. The enzyme catalyses tRNA(Gly) + glycine + ATP = glycyl-tRNA(Gly) + AMP + diphosphate. The chain is Glycine--tRNA ligase beta subunit from Azotobacter vinelandii (strain DJ / ATCC BAA-1303).